The following is a 306-amino-acid chain: Elongation factor Ts (306 aa).

The segment at 80 to 83 (TDFV) is involved in Mg(2+) ion dislocation from EF-Tu.

Belongs to the EF-Ts family.

It localises to the cytoplasm. Associates with the EF-Tu.GDP complex and induces the exchange of GDP to GTP. It remains bound to the aminoacyl-tRNA.EF-Tu.GTP complex up to the GTP hydrolysis stage on the ribosome. The protein is Elongation factor Ts of Leptothrix cholodnii (strain ATCC 51168 / LMG 8142 / SP-6) (Leptothrix discophora (strain SP-6)).